We begin with the raw amino-acid sequence, 379 residues long: Lactosylceramide 1,3-N-acetyl-beta-D-glucosaminyltransferase A (379 aa).

Residues 1–12 are Cytoplasmic-facing; sequence MFMNCRRVKKWH. A helical; Signal-anchor for type II membrane protein membrane pass occupies residues 13-30; that stretch reads FLQLLSMCCVMSVLMVCW. Residues 31–379 are Lumenal-facing; sequence EHVDHHVVSH…NTYSCMAAFT (349 aa). N57, N113, N168, and N277 each carry an N-linked (GlcNAc...) asparagine glycan.

It belongs to the glycosyltransferase 31 family.

The protein localises to the golgi apparatus membrane. It catalyses the reaction a beta-D-Gal-(1-&gt;4)-beta-D-Glc-(1&lt;-&gt;1)-Cer(d18:1(4E)) + UDP-N-acetyl-alpha-D-glucosamine = a beta-D-GlcNAc-(1-&gt;3)-beta-D-Gal-(1-&gt;4)-beta-D-Glc-(1&lt;-&gt;1)-Cer(d18:1(4E)) + UDP + H(+). The enzyme catalyses a neolactoside nLc4Cer(d18:1(4E)) + UDP-N-acetyl-alpha-D-glucosamine = a neolactoside IV(3)-beta-GlcNAc-nLc4Cer(d18:1(4E)) + UDP + H(+). The protein operates within protein modification; protein glycosylation. Functionally, beta-1,3-N-acetylglucosaminyltransferase that plays a key role in the synthesis of lacto- or neolacto-series carbohydrate chains on glycolipids. In Danio rerio (Zebrafish), this protein is Lactosylceramide 1,3-N-acetyl-beta-D-glucosaminyltransferase A (b3gnt5a).